The chain runs to 399 residues: (R)-2-hydroxy-4-methylpentanoate CoA-transferase (399 aa).

The active-site Nucleophile is the D171.

This sequence belongs to the CoA-transferase III family. Homodimer.

The catalysed reaction is 4-methylpentanoyl-CoA + (2R)-hydroxy-4-methylpentanoate = (R)-2-hydroxy-4-methylpentanoyl-CoA + 4-methylpentanoate. It participates in amino-acid degradation; L-leucine degradation. Involved in the reductive branch of L-leucine fermentation. Catalyzes the transfer of the CoA moiety from 4-methylpentanoyl-CoA (isocaproyl-CoA) to (R)-2-hydroxy-4-methylpentanoate ((R)-2-hydroxyisocaproate), leading to the formation of (R)-2-hydroxy-4-methylpentanoyl-CoA. Other CoA thioesters, such as acetyl-CoA or butyryl-CoA, are not accepted as substrates. The polypeptide is (R)-2-hydroxy-4-methylpentanoate CoA-transferase (Clostridioides difficile (Peptoclostridium difficile)).